Consider the following 477-residue polypeptide: Glutamate--tRNA ligase (477 aa).

The short motif at P18–N28 is the 'HIGH' region element. The span at P128–P138 shows a compositional bias: basic and acidic residues. The disordered stretch occupies residues P128–P151. The 'KMSKS' region motif lies at K250–R254. K253 contributes to the ATP binding site.

Belongs to the class-I aminoacyl-tRNA synthetase family. Glutamate--tRNA ligase type 1 subfamily. As to quaternary structure, monomer.

It localises to the cytoplasm. The catalysed reaction is tRNA(Glu) + L-glutamate + ATP = L-glutamyl-tRNA(Glu) + AMP + diphosphate. Its function is as follows. Catalyzes the attachment of glutamate to tRNA(Glu) in a two-step reaction: glutamate is first activated by ATP to form Glu-AMP and then transferred to the acceptor end of tRNA(Glu). The polypeptide is Glutamate--tRNA ligase (Verminephrobacter eiseniae (strain EF01-2)).